The chain runs to 675 residues: PML-RARA-regulated adapter molecule 1 (675 aa).

A compositionally biased stretch (polar residues) spans 1–19 (MGSNQDFRNLQAKFQTSQP). Disordered regions lie at residues 1-473 (MGSN…GPIN) and 523-562 (TDDS…PQQL). Residues 23–35 (ELFRKTPKPELNK) are compositionally biased toward basic and acidic residues. The span at 43 to 58 (TELSEQPKKSSQSELS) shows a compositional bias: polar residues. The segment covering 141 to 150 (PKPEFGELSK) has biased composition (basic and acidic residues). 3 stretches are compositionally biased toward polar residues: residues 224 to 242 (RKSQ…SPSK), 251 to 264 (HSPQ…PKNN), and 322 to 331 (LQPSDLTRAS). Ser-374 carries the post-translational modification Phosphoserine. The segment covering 407 to 422 (SECSLPSASAGSSPQC) has biased composition (polar residues). The span at 462–471 (PAKPALPPGP) shows a compositional bias: pro residues. Residues 537-546 (LSTQQATRWP) are compositionally biased toward polar residues. The 79-residue stretch at 578-656 (KAEREFRKKF…PRTALLPLET (79 aa)) folds into the SH3 domain.

Interacts with SKAP2, LCP2 and DBNL. May interact with LYN. Interacts with NEK6. May be phosphorylated on tyrosines. As to expression, expressed in bone marrow and mature neutrophils. Weakly expressed in macrophages and mast cells.

Its function is as follows. May be involved in integrin signaling in neutrophils. Binds to PtdIns(4)P. This is PML-RARA-regulated adapter molecule 1 (Pram1) from Mus musculus (Mouse).